A 357-amino-acid chain; its full sequence is UDP-N-acetylglucosamine 2-epimerase homolog (357 aa).

It belongs to the UDP-N-acetylglucosamine 2-epimerase family.

This is UDP-N-acetylglucosamine 2-epimerase homolog from Methanococcus maripaludis (strain DSM 14266 / JCM 13030 / NBRC 101832 / S2 / LL).